A 379-amino-acid chain; its full sequence is Stimulator of interferon genes protein (379 aa).

Helical transmembrane passes span Ala-18–Glu-38 and Ile-43–Val-63. Residues Cys-88 and Cys-91 are each lipidated (S-palmitoyl cysteine). A run of 2 helical transmembrane segments spans residues Leu-89–Phe-109 and His-114–Leu-134. Positions Leu-153 to Glu-340 are cyclic dinucleotide-binding domain (CBD). 2',3'-cGAMP-binding residues include Ser-162, Tyr-167, Arg-238, and Thr-263. Residues Ser-162, Tyr-167, Arg-238–Thr-241, and Thr-263 contribute to the 3',3'-c-di-GMP site. Tyr-167, Arg-238, and Thr-263 together coordinate 2',3'-cUAMP. The disordered stretch occupies residues Lys-338–Leu-363. The tract at residues Glu-340–Phe-379 is C-terminal tail (CTT). Ser-355 bears the Phosphoserine mark. The pLxIS motif motif lies at Leu-363–Ser-366. Ser-366 carries the phosphoserine; by TBK1 modification.

Belongs to the STING family. As to quaternary structure, homodimer; forms a homodimer in absence of cyclic nucleotide (c-di-GMP or cGAMP). Homotetramer; in presence of cyclic nucleotide (c-di-GMP or cGAMP), forms tetramers and higher-order oligomers through side-by-side packing. Interacts (when phosphorylated) with IRF3; following activation and phosphorylation on the pLxIS motif by TBK1, recruits IRF3. Interacts with TBK1; when homodimer, leading to subsequent production of IFN-beta. Interacts (via transmembrane domain) with TMEM203. Phosphorylation by TBK1 leads to activation and production of IFN-beta. Following cyclic nucleotide (c-di-GMP or cGAMP)-binding, activation and translocation from the endoplasmic reticulum, STING1 is phosphorylated by TBK1 at Ser-366 in the pLxIS motif. The phosphorylated pLxIS motif constitutes an IRF3-binding motif, leading to recruitment of the transcription factor IRF3 to induce type-I interferons and other cytokines. In contrast, lacks phosphorylation site at position 358, leading to reduced production of type-I interferons and other cytokines.

Its subcellular location is the endoplasmic reticulum membrane. The protein resides in the cytoplasm. It localises to the perinuclear region. It is found in the endoplasmic reticulum-Golgi intermediate compartment membrane. The protein localises to the golgi apparatus membrane. Its subcellular location is the cytoplasmic vesicle. The protein resides in the autophagosome membrane. It localises to the mitochondrion outer membrane. It is found in the cell membrane. It catalyses the reaction H(+)(in) = H(+)(out). Functionally, facilitator of innate immune signaling that acts as a sensor of cytosolic DNA from bacteria and viruses and promotes low production of type I interferon (IFN-alpha and IFN-beta). Compared to other mammals, STING1-dependent type I interferon induction is strongly reduced in bats, suggesting that the cGAS-STING pathway promotes a limited inflammatory response. Innate immune response is triggered in response to non-CpG double-stranded DNA from viruses and bacteria delivered to the cytoplasm. Acts by binding cyclic dinucleotides: recognizes and binds cyclic di-GMP (c-di-GMP), a second messenger produced by bacteria, cyclic UMP-AMP (2',3'-cUAMP), and cyclic GMP-AMP (cGAMP), a messenger produced by CGAS in response to DNA virus in the cytosol. Upon binding to c-di-GMP, cUAMP or cGAMP, STING1 oligomerizes, translocates from the endoplasmic reticulum and is phosphorylated by TBK1 on the pLxIS motif, leading to recruitment and subsequent activation of the transcription factor IRF3 to induce expression of type I interferon and exert a potent anti-viral state. In addition to promote the production of type I interferons, plays a direct role in autophagy. Following cGAMP-binding, STING1 buds from the endoplasmic reticulum into COPII vesicles, which then form the endoplasmic reticulum-Golgi intermediate compartment (ERGIC). The ERGIC serves as the membrane source for WIPI2 recruitment and LC3 lipidation, leading to formation of autophagosomes that target cytosolic DNA or DNA viruses for degradation by the lysosome. Promotes autophagy by acting as a proton channel that directs proton efflux from the Golgi to facilitate MAP1LC3B/LC3B lipidation. The autophagy- and interferon-inducing activities can be uncoupled and autophagy induction is independent of TBK1 phosphorylation. The sequence is that of Stimulator of interferon genes protein from Pteronotus parnellii (Parnell's mustached bat).